Consider the following 225-residue polypeptide: Claudin-17 (225 aa).

Residues 1–7 (MAFYPLQ) lie on the Cytoplasmic side of the membrane. The helical transmembrane segment at 8 to 28 (IAGLVLGFLGMVGTLATTLLP) threads the bilayer. The Extracellular portion of the chain corresponds to 29-81 (QWRVSAFIGSNIIVFERIWEGLWMNCVRQAKARLQCKFYSSMLALSPALEAAR). The helical transmembrane segment at 82-102 (ALMCVAVALSLIALIIGICGM) threads the bilayer. Residues 103–124 (KKIQCTGSNERAKAYLLGTSGV) lie on the Cytoplasmic side of the membrane. The chain crosses the membrane as a helical span at residues 125 to 145 (LFILTGIFVLIPVCWTANIII). Residues 146–164 (RDFYNPAVHVGQKRELGAA) lie on the Extracellular side of the membrane. The chain crosses the membrane as a helical span at residues 165–185 (LFLGWASVAVLFIAGGLLCGF). Over 186-225 (CCCNRKKQRDGYPAPRPSMPRTDERRRNMTRQSETPTSYV) the chain is Cytoplasmic. Positions 194 to 225 (RDGYPAPRPSMPRTDERRRNMTRQSETPTSYV) are disordered. Residues 215–225 (TRQSETPTSYV) show a composition bias toward polar residues.

The protein belongs to the claudin family. As to quaternary structure, does not form homotypic polymeric strands and it is not sufficient to form tight junctions by its own. Interacts with OCLN.

The protein resides in the cell junction. Its subcellular location is the tight junction. It localises to the cell membrane. The catalysed reaction is chloride(in) = chloride(out). The enzyme catalyses hydrogencarbonate(in) = hydrogencarbonate(out). It catalyses the reaction bromide(in) = bromide(out). It carries out the reaction iodide(out) = iodide(in). The catalysed reaction is fluoride(in) = fluoride(out). The enzyme catalyses nitrate(in) = nitrate(out). It catalyses the reaction thiocyanate(in) = thiocyanate(out). Channel-forming tight junction protein with selectivity for anions, including chloride and hydrogencarbonate, and for solutes smaller than 9 Angstrom in diameter. In the kidney proximal tubule, may be involved in quantitative reabsorption of filtered anions. Does not affect water permeability. This Sus scrofa (Pig) protein is Claudin-17 (CLDN17).